The primary structure comprises 816 residues: Chitin synthase 1 (816 aa).

A disordered region spans residues 1–21; the sequence is MLSQGEILRNPSRTRLQRPPK. The Cytoplasmic portion of the chain corresponds to 1 to 32; that stretch reads MLSQGEILRNPSRTRLQRPPKSRSERKGWWYR. Residues 33–53 form a helical membrane-spanning segment; the sequence is VTIFLTCLIPNFMLRCFGMTT. Over 54–63 the chain is Extracellular; that stretch reads PEVQHAWREK. Residues 64-84 traverse the membrane as a helical segment; that stretch reads VALCICIFFCWIILGFTTYGM. At 85–240 the chain is on the cytoplasmic side; the sequence is NTIICKGSNQ…TPGCLLADTM (156 aa). The chain crosses the membrane as a helical span at residues 241-261; it reads FWITTISIFGLIITKFLLGFF. The Extracellular segment spans residues 262–697; that stretch reads YSWYAKRRPK…QLVVVMELFG (436 aa). N-linked (GlcNAc...) asparagine glycosylation is found at N319 and N664. Residues 698–718 traverse the membrane as a helical segment; it reads TLVLPAAIIFTFVMIAVSILI. Topologically, residues 719–720 are cytoplasmic; sequence EP. The chain crosses the membrane as a helical span at residues 721-741; sequence AWVPLIMLVGIFGLPAVLILI. Residues 742–745 lie on the Extracellular side of the membrane; the sequence is TTME. A helical transmembrane segment spans residues 746-766; that stretch reads IQYVFWCLVYILSIPIWNFVL. Residues 767–816 lie on the Cytoplasmic side of the membrane; it reads PTYAFWHFDNFSWGDTRKVDGEGKEDEEGEFDHTKIRIRELEEFLSEANK.

Belongs to the chitin synthase family. Class IV subfamily.

The protein localises to the cell membrane. The enzyme catalyses [(1-&gt;4)-N-acetyl-beta-D-glucosaminyl](n) + UDP-N-acetyl-alpha-D-glucosamine = [(1-&gt;4)-N-acetyl-beta-D-glucosaminyl](n+1) + UDP + H(+). Functionally, polymerizes chitin, a structural polymer of the cell wall and septum, by transferring the sugar moiety of UDP-GlcNAc to the non-reducing end of the growing chitin polymer. This is Chitin synthase 1 (CHS1) from Encephalitozoon cuniculi (strain GB-M1) (Microsporidian parasite).